A 448-amino-acid polypeptide reads, in one-letter code: MSDNVPTIAAVATAPGRGGVGVIRISGKNLLPMAQALCGKTPEPRVATYADFTDADGQAIDSGLLLFFAAPASFTGEDVIELQGHGGPVVMEMLLNRCLELGARLAEPGEFTKRAFLNDKLDLAQAEGVADLIDASGRSAARLALRSLKGDFSRRIHGLVEGLITLRMLVEAALDFPEEDIDFLEAADARGKLDGLRRAVDDVLANAQQGAILREGLNVVLVGAPNVGKSSLLNALAGDEVAIVTDIAGTTRDAVRERILIDGVPVHIVDTAGLRETDDVVERIGIERSRKAVSEADVALVLVDPREGLNEKTRMILDTLPSDLKRIEIHSKSDLHAHAAGGFGTGAETVIALSAKTGDGLDALKRTLLCEAGWQGESEGLFLARTRHVNALKAAQEELSLAALCGNHQIELFAEHLRLAQVACGEITGEFTADDLLGVIFSRFCIGK.

Positions 24, 81, and 120 each coordinate (6S)-5-formyl-5,6,7,8-tetrahydrofolate. In terms of domain architecture, TrmE-type G spans 216 to 373 (GLNVVLVGAP…LKRTLLCEAG (158 aa)). Asparagine 226 provides a ligand contact to K(+). Residues 226-231 (NVGKSS), 245-251 (TDIAGTT), and 270-273 (DTAG) each bind GTP. Serine 230 serves as a coordination point for Mg(2+). Positions 245, 247, and 250 each coordinate K(+). Threonine 251 contributes to the Mg(2+) binding site. Residue lysine 448 participates in (6S)-5-formyl-5,6,7,8-tetrahydrofolate binding.

It belongs to the TRAFAC class TrmE-Era-EngA-EngB-Septin-like GTPase superfamily. TrmE GTPase family. Homodimer. Heterotetramer of two MnmE and two MnmG subunits. It depends on K(+) as a cofactor.

The protein resides in the cytoplasm. Functionally, exhibits a very high intrinsic GTPase hydrolysis rate. Involved in the addition of a carboxymethylaminomethyl (cmnm) group at the wobble position (U34) of certain tRNAs, forming tRNA-cmnm(5)s(2)U34. In Neisseria gonorrhoeae (strain ATCC 700825 / FA 1090), this protein is tRNA modification GTPase MnmE.